Consider the following 266-residue polypeptide: Glioma pathogenesis-related protein 1 (266 aa).

The N-terminal stretch at 1–21 is a signal peptide; that stretch reads MRVTLATIAWMVSFVSNYSHT. One can recognise an SCP domain in the interval 38–175; it reads VRIHNKFRSE…SNGAHFICNY (138 aa). A helical membrane pass occupies residues 233–255; it reads YTSLFLIVNSVILILSVIITILV.

Belongs to the CRISP family. According to PubMed:8973356, it is ubiquitously expressed with high levels in lung and kidney and low levels in heart and liver. Highly expressed in cell lines derived from nervous system tumors arising from glia, low or absent in non-glial-derived nervous system tumor cell lines. Also found in fetal kidney. According to PubMed:7607567 it is expressed only in brain tumor glioblastoma multiforme/astrocytoma and not in other nervous system tumors or normal fetal or adult tissues.

The protein localises to the membrane. In Homo sapiens (Human), this protein is Glioma pathogenesis-related protein 1 (GLIPR1).